The sequence spans 132 residues: Cytochrome c' (132 aa).

The heme c site is built by Arg-10, Gln-11, Asp-65, Cys-122, Cys-125, and His-126.

Binds 1 heme c group covalently per subunit.

Its function is as follows. Cytochrome c' is the most widely occurring bacterial c-type cytochrome. Cytochromes c' are high-spin proteins and the heme has no sixth ligand. Their exact function is not known. This Halomonas halodenitrificans (strain ATCC 12084 / NCIMB 8669) (Paracoccus halodenitrificans) protein is Cytochrome c'.